The chain runs to 353 residues: UPF0283 membrane protein YcjF (353 aa).

The interval 16–35 (KEESTSAFKAQQTFSEAESR) is disordered. A compositionally biased stretch (polar residues) spans 20–31 (TSAFKAQQTFSE). A run of 3 helical transmembrane segments spans residues 70 to 90 (MVMG…VQWT), 100 to 120 (VALG…GSVV), and 213 to 233 (ESTL…FIAW).

The protein belongs to the UPF0283 family.

The protein localises to the cell inner membrane. This chain is UPF0283 membrane protein YcjF, found in Salmonella heidelberg (strain SL476).